A 191-amino-acid chain; its full sequence is Photosystem I assembly protein Ycf4 (191 aa).

2 helical membrane-spanning segments follow: residues 34-54 (VASM…SSYF) and 68-88 (IFVP…LLAI).

This sequence belongs to the Ycf4 family.

It is found in the cellular thylakoid membrane. Seems to be required for the assembly of the photosystem I complex. The polypeptide is Photosystem I assembly protein Ycf4 (Prochlorococcus marinus (strain NATL2A)).